A 238-amino-acid polypeptide reads, in one-letter code: 5-amino-6-(5-phospho-D-ribitylamino)uracil phosphatase YigB (238 aa).

D16 serves as the catalytic Nucleophile. Mg(2+) is bound by residues D16, D18, and D188. 16–18 contributes to the substrate binding site; sequence DLD.

This sequence belongs to the HAD-like hydrolase superfamily. It depends on Mg(2+) as a cofactor. Mn(2+) is required as a cofactor. Co(2+) serves as cofactor. Requires Zn(2+) as cofactor.

It catalyses the reaction 5-amino-6-(5-phospho-D-ribitylamino)uracil + H2O = 5-amino-6-(D-ribitylamino)uracil + phosphate. It participates in cofactor biosynthesis; riboflavin biosynthesis; 5-amino-6-(D-ribitylamino)uracil from GTP: step 4/4. In terms of biological role, catalyzes the dephosphorylation of 5-amino-6-(5-phospho-D-ribitylamino)uracil, and thus could be involved in the riboflavin biosynthesis pathway. Is also able to dephosphorylate flavin mononucleotide (FMN) and other phosphoric acid esters. YigB is important for the formation of dormant persister cells. The protein is 5-amino-6-(5-phospho-D-ribitylamino)uracil phosphatase YigB (yigB) of Escherichia coli (strain K12).